A 336-amino-acid chain; its full sequence is tRNA N6-adenosine threonylcarbamoyltransferase (336 aa).

His114 and His118 together coordinate Fe cation. Residues 136 to 140 (LVSGG), Asp169, Gly182, Asp186, and Asn275 each bind substrate. Asp301 contributes to the Fe cation binding site.

This sequence belongs to the KAE1 / TsaD family. Fe(2+) serves as cofactor.

It is found in the cytoplasm. The enzyme catalyses L-threonylcarbamoyladenylate + adenosine(37) in tRNA = N(6)-L-threonylcarbamoyladenosine(37) in tRNA + AMP + H(+). In terms of biological role, required for the formation of a threonylcarbamoyl group on adenosine at position 37 (t(6)A37) in tRNAs that read codons beginning with adenine. Is involved in the transfer of the threonylcarbamoyl moiety of threonylcarbamoyl-AMP (TC-AMP) to the N6 group of A37, together with TsaE and TsaB. TsaD likely plays a direct catalytic role in this reaction. The polypeptide is tRNA N6-adenosine threonylcarbamoyltransferase (Streptococcus pneumoniae (strain CGSP14)).